Consider the following 34-residue polypeptide: Photosystem II reaction center protein Psb30 (34 aa).

Residues 9–29 (QLIATGTIMLAGPAVIVLLAL) traverse the membrane as a helical segment.

It belongs to the Psb30/Ycf12 family. PSII is composed of 1 copy each of membrane proteins PsbA, PsbB, PsbC, PsbD, PsbE, PsbF, PsbH, PsbI, PsbJ, PsbK, PsbL, PsbM, PsbT, PsbX, PsbY, PsbZ, Psb30/Ycf12, peripheral proteins of the oxygen-evolving complex and a large number of cofactors. It forms dimeric complexes.

The protein localises to the plastid. It localises to the chloroplast thylakoid membrane. Its function is as follows. A core subunit of photosystem II (PSII), probably helps stabilize the reaction center. The protein is Photosystem II reaction center protein Psb30 of Phaeodactylum tricornutum (strain CCAP 1055/1).